A 293-amino-acid polypeptide reads, in one-letter code: 4-hydroxy-tetrahydrodipicolinate synthase (293 aa).

Residue threonine 45 coordinates pyruvate. Catalysis depends on tyrosine 133, which acts as the Proton donor/acceptor. The Schiff-base intermediate with substrate role is filled by lysine 161. Isoleucine 204 is a pyruvate binding site.

It belongs to the DapA family. In terms of assembly, homotetramer; dimer of dimers.

Its subcellular location is the cytoplasm. It carries out the reaction L-aspartate 4-semialdehyde + pyruvate = (2S,4S)-4-hydroxy-2,3,4,5-tetrahydrodipicolinate + H2O + H(+). It participates in amino-acid biosynthesis; L-lysine biosynthesis via DAP pathway; (S)-tetrahydrodipicolinate from L-aspartate: step 3/4. Its function is as follows. Catalyzes the condensation of (S)-aspartate-beta-semialdehyde [(S)-ASA] and pyruvate to 4-hydroxy-tetrahydrodipicolinate (HTPA). In Yersinia pseudotuberculosis serotype O:1b (strain IP 31758), this protein is 4-hydroxy-tetrahydrodipicolinate synthase.